A 239-amino-acid polypeptide reads, in one-letter code: Ribose-5-phosphate isomerase A (239 aa).

Substrate-binding positions include 31–34 (FGST), 88–91 (DGAD), and 101–104 (KGGG). Glu-110 (proton acceptor) is an active-site residue. A substrate-binding site is contributed by Lys-128.

This sequence belongs to the ribose 5-phosphate isomerase family. As to quaternary structure, homodimer.

It carries out the reaction aldehydo-D-ribose 5-phosphate = D-ribulose 5-phosphate. It participates in carbohydrate degradation; pentose phosphate pathway; D-ribose 5-phosphate from D-ribulose 5-phosphate (non-oxidative stage): step 1/1. Functionally, catalyzes the reversible conversion of ribose-5-phosphate to ribulose 5-phosphate. This Chloroflexus aurantiacus (strain ATCC 29366 / DSM 635 / J-10-fl) protein is Ribose-5-phosphate isomerase A.